The chain runs to 131 residues: D-ribose pyranase (131 aa).

H20 serves as the catalytic Proton donor. Substrate-binding positions include D28, H98, and 120–122 (YAN).

This sequence belongs to the RbsD / FucU family. RbsD subfamily. In terms of assembly, homodecamer.

The protein localises to the cytoplasm. It catalyses the reaction beta-D-ribopyranose = beta-D-ribofuranose. It participates in carbohydrate metabolism; D-ribose degradation; D-ribose 5-phosphate from beta-D-ribopyranose: step 1/2. In terms of biological role, catalyzes the interconversion of beta-pyran and beta-furan forms of D-ribose. The protein is D-ribose pyranase of Bacillus cereus (strain ATCC 14579 / DSM 31 / CCUG 7414 / JCM 2152 / NBRC 15305 / NCIMB 9373 / NCTC 2599 / NRRL B-3711).